We begin with the raw amino-acid sequence, 131 residues long: Small ribosomal subunit protein uS12 (131 aa).

Positions 1–22 (MPTTQQLLRKGRKVLQKKSKVP) are disordered. Positions 9–20 (RKGRKVLQKKSK) are enriched in basic residues. 3-methylthioaspartic acid is present on aspartate 89. Residues 102–131 (LDTQGVKDRNKSRSKYGTKKPKAGAAAAKK) form a disordered region. A compositionally biased stretch (basic residues) spans 113 to 131 (SRSKYGTKKPKAGAAAAKK).

This sequence belongs to the universal ribosomal protein uS12 family. In terms of assembly, part of the 30S ribosomal subunit. Contacts proteins S8 and S17. May interact with IF1 in the 30S initiation complex.

In terms of biological role, with S4 and S5 plays an important role in translational accuracy. Its function is as follows. Interacts with and stabilizes bases of the 16S rRNA that are involved in tRNA selection in the A site and with the mRNA backbone. Located at the interface of the 30S and 50S subunits, it traverses the body of the 30S subunit contacting proteins on the other side and probably holding the rRNA structure together. The combined cluster of proteins S8, S12 and S17 appears to hold together the shoulder and platform of the 30S subunit. This is Small ribosomal subunit protein uS12 from Deinococcus radiodurans (strain ATCC 13939 / DSM 20539 / JCM 16871 / CCUG 27074 / LMG 4051 / NBRC 15346 / NCIMB 9279 / VKM B-1422 / R1).